The following is a 399-amino-acid chain: Lipase member K (399 aa).

Positions 1–19 (MWQLLAAACWMLLLGSMYG) are cleaved as a signal peptide. One can recognise an AB hydrolase-1 domain in the interval 78–378 (PAVYLQHGLI…HYNHVDFYLG (301 aa)). The active-site Nucleophile is the serine 172. Cysteine 246 and cysteine 255 are oxidised to a cystine. 2 N-linked (GlcNAc...) asparagine glycosylation sites follow: asparagine 271 and asparagine 327. Catalysis depends on charge relay system residues aspartate 343 and histidine 372.

The protein belongs to the AB hydrolase superfamily. Lipase family. As to expression, exclusively expressed in the epidermis within the granular keratinocytes.

The protein localises to the secreted. Its function is as follows. Plays a highly specific role in the last step of keratinocyte differentiation. May have an essential function in lipid metabolism of the most differentiated epidermal layers. In Homo sapiens (Human), this protein is Lipase member K (LIPK).